The sequence spans 61 residues: U-poneritoxin(01)-Om5a (61 aa).

The N-terminal stretch at 1 to 23 (MKLSALSLAFAIILMMTIMYTKA) is a signal peptide. A propeptide spanning residues 24 to 41 (DADASADAEADADAEAEA) is cleaved from the precursor. At Gln59 the chain carries Glutamine amide.

The protein belongs to the formicidae venom precursor-01 superfamily. Post-translationally, truncated sequences of this peptide have also been found in the venom. It is possible they have been cleaved in the venom. In terms of tissue distribution, expressed by the venom gland.

The protein resides in the secreted. In terms of biological role, acidic peptide with potent hemolytic activities (94.8% at 50 uM). It also shows low antimicrobial activities against E.coli (MIC=50uM), as well as histamine-releasing activity (28.3% at 10 uM). Does not have activity against S.aureus, and S.cerevisiae. The sequence is that of U-poneritoxin(01)-Om5a from Odontomachus monticola (Trap-jaw ant).